The chain runs to 399 residues: S-adenosylmethionine synthase (399 aa).

H17 is an ATP binding site. Residue D19 coordinates Mg(2+). Residue E45 participates in K(+) binding. E58 and Q101 together coordinate L-methionine. Positions 101–111 (QSPDIAQGVDE) are flexible loop. ATP contacts are provided by residues 177–179 (DAK), 244–245 (RF), D253, 259–260 (RK), A276, and K280. D253 provides a ligand contact to L-methionine. An L-methionine-binding site is contributed by K284.

The protein belongs to the AdoMet synthase family. Homotetramer; dimer of dimers. The cofactor is Mg(2+). It depends on K(+) as a cofactor.

Its subcellular location is the cytoplasm. The catalysed reaction is L-methionine + ATP + H2O = S-adenosyl-L-methionine + phosphate + diphosphate. It participates in amino-acid biosynthesis; S-adenosyl-L-methionine biosynthesis; S-adenosyl-L-methionine from L-methionine: step 1/1. Functionally, catalyzes the formation of S-adenosylmethionine (AdoMet) from methionine and ATP. The overall synthetic reaction is composed of two sequential steps, AdoMet formation and the subsequent tripolyphosphate hydrolysis which occurs prior to release of AdoMet from the enzyme. The polypeptide is S-adenosylmethionine synthase (Listeria welshimeri serovar 6b (strain ATCC 35897 / DSM 20650 / CCUG 15529 / CIP 8149 / NCTC 11857 / SLCC 5334 / V8)).